The primary structure comprises 238 residues: ATP synthase subunit a (238 aa).

A run of 5 helical transmembrane segments spans residues 18 to 38 (LTIL…VFWA), 75 to 95 (YSLL…LGLM), 112 to 132 (NFGV…IEGI), 179 to 199 (VVTG…PLAF), and 203 to 223 (IVWT…FIIL).

Belongs to the ATPase A chain family. F-type ATPases have 2 components, CF(1) - the catalytic core - and CF(0) - the membrane proton channel. CF(1) has five subunits: alpha(3), beta(3), gamma(1), delta(1), epsilon(1). CF(0) has three main subunits: a(1), b(2) and c(9-12). The alpha and beta chains form an alternating ring which encloses part of the gamma chain. CF(1) is attached to CF(0) by a central stalk formed by the gamma and epsilon chains, while a peripheral stalk is formed by the delta and b chains.

Its subcellular location is the cell membrane. Its function is as follows. Key component of the proton channel; it plays a direct role in the translocation of protons across the membrane. This chain is ATP synthase subunit a, found in Streptococcus agalactiae serotype Ia (strain ATCC 27591 / A909 / CDC SS700).